Here is a 370-residue protein sequence, read N- to C-terminus: Putative glutamate--cysteine ligase 2 (370 aa).

Belongs to the glutamate--cysteine ligase type 2 family. YbdK subfamily.

It catalyses the reaction L-cysteine + L-glutamate + ATP = gamma-L-glutamyl-L-cysteine + ADP + phosphate + H(+). Its function is as follows. ATP-dependent carboxylate-amine ligase which exhibits weak glutamate--cysteine ligase activity. The polypeptide is Putative glutamate--cysteine ligase 2 (Methylibium petroleiphilum (strain ATCC BAA-1232 / LMG 22953 / PM1)).